We begin with the raw amino-acid sequence, 611 residues long: MNKLIQSKLELLPTSPGCYIHKDKNDTIIYVGKAKNLRNRVRSYFRGSHDTKTEALVSEIEDFEFIVTESNIEALLLEINLIKENQPKYNIMLKDDKSYPFIKITNETYPRLIITRQVKKDVGLYFGPYPDVGAANEIKRLLDRLFPFRKCTNPPEKVCFYYHLGQCKAHTICKVDSQYFKELAQEVAAFLKGQDDQIIEDLRGKMAGAAQAMEFEKAAEYRDLIQSIGTLRTKQRVMAKDLQNRDVFGYYVDKGWMCVQVFFVRQGKLIERDVNLFPYYNDPDEDFLTYIGQFYQEKSHLKPNEILIPADIDEEAVRAMVDTKVLKPQRGEKKQLVNLAIKNARVSLQQKFDLLEKSIEKTQGAIENLGQLLNIPTPVRIESFDNSNIMGTSPVSAMVVFVNGKPSKKDYRKYKIKTVVGPDDYASMREVIKRRYSRVIRDGLTPPDLIVIDGGQGQVNIAKEVIQEQLGLDIPIAGLQKNDKHQTHELLFGDPLQVVELSRNSQEFFLLQRIQDEVHRFAITFHRQLRSKNSFSSQLDGIEGLGPKRKQNLMKHFKSLTKIKEASVDQIVEVGVPRAVAEAVREKLNPKTQEQEQAQLREVAEPQIGLE.

The GIY-YIG domain occupies 14-91 (TSPGCYIHKD…IKENQPKYNI (78 aa)). One can recognise a UVR domain in the interval 196-231 (DQIIEDLRGKMAGAAQAMEFEKAAEYRDLIQSIGTL). The interval 587-611 (KLNPKTQEQEQAQLREVAEPQIGLE) is disordered.

This sequence belongs to the UvrC family. As to quaternary structure, interacts with UvrB in an incision complex.

It is found in the cytoplasm. Its function is as follows. The UvrABC repair system catalyzes the recognition and processing of DNA lesions. UvrC both incises the 5' and 3' sides of the lesion. The N-terminal half is responsible for the 3' incision and the C-terminal half is responsible for the 5' incision. This is UvrABC system protein C from Streptococcus sanguinis (strain SK36).